Reading from the N-terminus, the 169-residue chain is Allophycocyanin subunit beta-18 (169 aa).

N72 bears the N4-methylasparagine mark. A (2R,3E)-phycocyanobilin-binding site is contributed by C82.

The protein belongs to the phycobiliprotein family. In terms of assembly, heterodimer of ApcE and this beta chain. In terms of processing, contains one covalently linked bilin chromophore. The chromophore is added by phycocyanobilin lyase CpcS 1.

The protein localises to the cellular thylakoid membrane. Functionally, a variant beta-allophycocyanin (AP) which forms a complex with ApcE, a phycobilisome terminal emitter that influences energy transfer to photosystem II. The sequence is that of Allophycocyanin subunit beta-18 (apcF) from Nostoc sp. (strain PCC 7120 / SAG 25.82 / UTEX 2576).